A 773-amino-acid chain; its full sequence is ATP-dependent RNA helicase MAK5 (773 aa).

Residues 73-82 (KDSNKEKVGD) show a composition bias toward basic and acidic residues. Disordered regions lie at residues 73–99 (KDSN…ESEL) and 114–144 (SAAS…VDED). Positions 83–99 (DQESVENESGSDSESEL) are enriched in acidic residues. Thr135 is subject to Phosphothreonine. Phosphoserine is present on Ser138. Positions 171 to 199 (EWTNLAPLSMTILQSLQNLNFLRPTEIQK) match the Q motif motif. Residues 202–399 (IPVIMQGVDV…SSSRQVKDRR (198 aa)) enclose the Helicase ATP-binding domain. 215–222 (ASTGSGKT) is an ATP binding site. The short motif at 333 to 336 (DEAD) is the DEAD box element. Positions 452 to 615 (DLYCYYFLTM…STDLNSRSTN (164 aa)) constitute a Helicase C-terminal domain. Ser678 carries the post-translational modification Phosphoserine.

It belongs to the DEAD box helicase family. DDX24/MAK5 subfamily.

It is found in the nucleus. Its subcellular location is the nucleolus. It catalyses the reaction ATP + H2O = ADP + phosphate + H(+). ATP-binding RNA helicase involved in the biogenesis of 60S ribosomal subunits and is required for the normal formation of 25S and 5.8S rRNAs. Required for the maintenance of dsRNA killer plasmid. This is ATP-dependent RNA helicase MAK5 (MAK5) from Saccharomyces cerevisiae (strain ATCC 204508 / S288c) (Baker's yeast).